The following is a 234-amino-acid chain: Transcription factor ILR3 (234 aa).

Positions 34–85 are disordered; that stretch reads QPIGVSSNSSAGVDGSAGNSEASKEPGSKKRGRCESSSATSSKACREKQRRD. Over residues 36-54 the composition is skewed to polar residues; it reads IGVSSNSSAGVDGSAGNSE. The bHLH domain maps to 71–122; sequence SATSSKACREKQRRDRLNDKFMELGAILEPGNPPKTDKAAILVDAVRMVTQL.

In terms of assembly, homodimer. Interacts with BTS and BHLH47/PYE. As to expression, widely expressed throughout development, mostly in vasculatures.

Its subcellular location is the nucleus. Functionally, transcription factor. Plays a role in resistance to amide-linked indole-3-acetic acid (IAA) conjugates such as IAA-Leu and IAA-Phe. May regulate gene expression in response to metal homeostasis changes. In Arabidopsis thaliana (Mouse-ear cress), this protein is Transcription factor ILR3 (ILR3).